Here is a 404-residue protein sequence, read N- to C-terminus: tRNA N6-adenosine threonylcarbamoyltransferase, mitochondrial (404 aa).

The transit peptide at 1–27 directs the protein to the mitochondrion; the sequence is MFQSCLPGALRSWSRGVFSTSTRPRLV. 2 residues coordinate a divalent metal cation: H135 and H139. Residues 157 to 161, D190, G210, E214, 317 to 318, and T345 contribute to the substrate site; these read LVSGG and SN. D346 is an a divalent metal cation binding site.

The protein belongs to the KAE1 / TsaD family. As to quaternary structure, monomer. The cofactor is a divalent metal cation.

The protein resides in the mitochondrion. The enzyme catalyses L-threonylcarbamoyladenylate + adenosine(37) in tRNA = N(6)-L-threonylcarbamoyladenosine(37) in tRNA + AMP + H(+). Its function is as follows. Required for the formation of a threonylcarbamoyl group on adenosine at position 37 (t(6)A37) in mitochondrial tRNAs that read codons beginning with adenine. Probably involved in the transfer of the threonylcarbamoyl moiety of threonylcarbamoyl-AMP (TC-AMP) to the N6 group of A37. Involved in mitochondrial genome maintenance. In Danio rerio (Zebrafish), this protein is tRNA N6-adenosine threonylcarbamoyltransferase, mitochondrial.